The sequence spans 145 residues: Arginine repressor (145 aa).

It belongs to the ArgR family.

It is found in the cytoplasm. It functions in the pathway amino-acid biosynthesis; L-arginine biosynthesis [regulation]. Regulates arginine biosynthesis genes. The chain is Arginine repressor from Streptococcus mutans serotype c (strain ATCC 700610 / UA159).